We begin with the raw amino-acid sequence, 347 residues long: NADH-ubiquinone oxidoreductase chain 2 (347 aa).

The next 10 membrane-spanning stretches (helical) occupy residues 1–21 (MNPL…LIVM), 25–45 (HWFM…PLLT), 67–87 (SMLL…WSIM), 111–131 (FHFW…LILL), 144–164 (MIMP…SIAI), 178–198 (IMAY…AYNP), 201–221 (TLLN…LLMI), 237–257 (LPLI…LPPL), 274–294 (SSII…YFYT), and 326–346 (LPLM…MPIL).

This sequence belongs to the complex I subunit 2 family. In terms of assembly, core subunit of respiratory chain NADH dehydrogenase (Complex I) which is composed of 45 different subunits. Interacts with TMEM242.

The protein localises to the mitochondrion inner membrane. It catalyses the reaction a ubiquinone + NADH + 5 H(+)(in) = a ubiquinol + NAD(+) + 4 H(+)(out). Core subunit of the mitochondrial membrane respiratory chain NADH dehydrogenase (Complex I) which catalyzes electron transfer from NADH through the respiratory chain, using ubiquinone as an electron acceptor. Essential for the catalytic activity and assembly of complex I. The chain is NADH-ubiquinone oxidoreductase chain 2 from Myotis simus (Velvety myotis).